Reading from the N-terminus, the 237-residue chain is UPF0173 metal-dependent hydrolase BOV_A0561 (237 aa).

It belongs to the UPF0173 family.

The sequence is that of UPF0173 metal-dependent hydrolase BOV_A0561 from Brucella ovis (strain ATCC 25840 / 63/290 / NCTC 10512).